Consider the following 237-residue polypeptide: Phosphoribosylaminoimidazole-succinocarboxamide synthase (237 aa).

It belongs to the SAICAR synthetase family.

It catalyses the reaction 5-amino-1-(5-phospho-D-ribosyl)imidazole-4-carboxylate + L-aspartate + ATP = (2S)-2-[5-amino-1-(5-phospho-beta-D-ribosyl)imidazole-4-carboxamido]succinate + ADP + phosphate + 2 H(+). It functions in the pathway purine metabolism; IMP biosynthesis via de novo pathway; 5-amino-1-(5-phospho-D-ribosyl)imidazole-4-carboxamide from 5-amino-1-(5-phospho-D-ribosyl)imidazole-4-carboxylate: step 1/2. The polypeptide is Phosphoribosylaminoimidazole-succinocarboxamide synthase (Methanosarcina acetivorans (strain ATCC 35395 / DSM 2834 / JCM 12185 / C2A)).